The primary structure comprises 339 residues: tRNA N6-adenosine threonylcarbamoyltransferase (339 aa).

The Fe cation site is built by histidine 112 and histidine 116. Substrate-binding positions include 135 to 139, aspartate 168, glycine 181, and asparagine 273; that span reads LVSGG. Aspartate 301 is a binding site for Fe cation.

Belongs to the KAE1 / TsaD family. Fe(2+) is required as a cofactor.

Its subcellular location is the cytoplasm. It catalyses the reaction L-threonylcarbamoyladenylate + adenosine(37) in tRNA = N(6)-L-threonylcarbamoyladenosine(37) in tRNA + AMP + H(+). In terms of biological role, required for the formation of a threonylcarbamoyl group on adenosine at position 37 (t(6)A37) in tRNAs that read codons beginning with adenine. Is involved in the transfer of the threonylcarbamoyl moiety of threonylcarbamoyl-AMP (TC-AMP) to the N6 group of A37, together with TsaE and TsaB. TsaD likely plays a direct catalytic role in this reaction. The protein is tRNA N6-adenosine threonylcarbamoyltransferase of Coxiella burnetii (strain RSA 493 / Nine Mile phase I).